A 155-amino-acid chain; its full sequence is DNA gyrase inhibitor (155 aa).

This sequence belongs to the DNA gyrase inhibitor family. In terms of assembly, interacts with DNA gyrase.

The protein resides in the cytoplasm. Its function is as follows. Inhibits the supercoiling activity of DNA gyrase. Acts by inhibiting DNA gyrase at an early step, prior to (or at the step of) binding of DNA by the gyrase. It protects cells against toxins that target DNA gyrase, by inhibiting activity of these toxins and reducing the formation of lethal double-strand breaks in the cell. The sequence is that of DNA gyrase inhibitor from Salmonella arizonae (strain ATCC BAA-731 / CDC346-86 / RSK2980).